A 292-amino-acid polypeptide reads, in one-letter code: Pyridoxal 5'-phosphate synthase subunit PdxS (292 aa).

Asp22 provides a ligand contact to D-ribose 5-phosphate. Lys79 (schiff-base intermediate with D-ribose 5-phosphate) is an active-site residue. A D-ribose 5-phosphate-binding site is contributed by Gly151. D-glyceraldehyde 3-phosphate is bound at residue Arg163. D-ribose 5-phosphate-binding positions include Gly212 and 233–234 (GS).

This sequence belongs to the PdxS/SNZ family. In the presence of PdxT, forms a dodecamer of heterodimers.

It catalyses the reaction aldehydo-D-ribose 5-phosphate + D-glyceraldehyde 3-phosphate + L-glutamine = pyridoxal 5'-phosphate + L-glutamate + phosphate + 3 H2O + H(+). The protein operates within cofactor biosynthesis; pyridoxal 5'-phosphate biosynthesis. Catalyzes the formation of pyridoxal 5'-phosphate from ribose 5-phosphate (RBP), glyceraldehyde 3-phosphate (G3P) and ammonia. The ammonia is provided by the PdxT subunit. Can also use ribulose 5-phosphate and dihydroxyacetone phosphate as substrates, resulting from enzyme-catalyzed isomerization of RBP and G3P, respectively. This Caldanaerobacter subterraneus subsp. tengcongensis (strain DSM 15242 / JCM 11007 / NBRC 100824 / MB4) (Thermoanaerobacter tengcongensis) protein is Pyridoxal 5'-phosphate synthase subunit PdxS.